An 817-amino-acid chain; its full sequence is Fibroblast growth factor receptor 2 (817 aa).

The first 22 residues, 1 to 22 (MFARGWLLGALLLMTLATVSVA), serve as a signal peptide directing secretion. Residues 23–377 (RPSLKIDLVN…ETDYPPDYVE (355 aa)) are Extracellular-facing. 3 consecutive Ig-like C2-type domains span residues 26 to 126 (LKID…VNVT), 159 to 247 (PEKM…YTLD), and 256 to 358 (PILQ…AWLT). N-linked (GlcNAc...) asparagine glycosylation is found at asparagine 32, asparagine 84, and asparagine 124. Cysteine 63 and cysteine 108 are joined by a disulfide. The segment at 161–178 (KMEKKLHAVPAANTVKFR) is heparin-binding. A disulfide bridge connects residues cysteine 179 and cysteine 231. Residues asparagine 228, asparagine 265, asparagine 297, asparagine 318, and asparagine 331 are each glycosylated (N-linked (GlcNAc...) asparagine). Cysteines 278 and 342 form a disulfide. A helical membrane pass occupies residues 378–398 (IAIYCIGVFLIACMVVIVVVC). Topologically, residues 399–817 (RMRTSAKKPD…YQHINGGIKT (419 aa)) are cytoplasmic. The tract at residues 429–465 (TVSSDSSSSMSSSTPLVRITTRRSSAHDDPIPEYDLP) is disordered. Low complexity predominate over residues 431–441 (SSDSSSSMSSS). Phosphotyrosine; by autocatalysis is present on tyrosine 462. The 290-residue stretch at 477–766 (LTLGKPLGEG…LTLATNEEYL (290 aa)) folds into the Protein kinase domain. ATP contacts are provided by residues 483 to 491 (LGEGCFGQV), lysine 513, 561 to 563 (EYA), and asparagine 567. Phosphotyrosine; by autocatalysis is present on tyrosine 582. The active-site Proton acceptor is aspartate 622. 3 positions are modified to phosphotyrosine; by autocatalysis: tyrosine 652, tyrosine 653, and tyrosine 765.

This sequence belongs to the protein kinase superfamily. Tyr protein kinase family. Fibroblast growth factor receptor subfamily. As to quaternary structure, monomer. Homodimer after ligand binding. Post-translationally, autophosphorylated. Binding of FGF family members together with heparan sulfate proteoglycan or heparin promotes receptor dimerization and autophosphorylation on tyrosine residues. Autophosphorylation occurs in trans between the two FGFR molecules present in the dimer. N-glycosylated in the endoplasmic reticulum. The N-glycan chains undergo further maturation to an Endo H-resistant form in the Golgi apparatus. In terms of processing, ubiquitinated. FGFR2 is rapidly ubiquitinated after autophosphorylation, leading to internalization and degradation. Subject to degradation both in lysosomes and by the proteasome.

It localises to the cell membrane. Its subcellular location is the golgi apparatus. The protein localises to the cytoplasmic vesicle. It carries out the reaction L-tyrosyl-[protein] + ATP = O-phospho-L-tyrosyl-[protein] + ADP + H(+). Its activity is regulated as follows. Present in an inactive conformation in the absence of bound ligand. Ligand binding leads to dimerization and activation by autophosphorylation on tyrosine residues. Tyrosine-protein kinase that acts as a cell-surface receptor for fibroblast growth factors and plays an essential role in the regulation of cell proliferation, differentiation, migration and apoptosis, and in the regulation of embryonic development. Required for normal embryonic patterning, limb bud development, lung morphogenesis, osteogenesis and skin development. Plays an essential role in the regulation of osteoblast differentiation, proliferation and apoptosis, and is required for normal skeleton development. Promotes cell proliferation in keratinocytes and immature osteoblasts, but promotes apoptosis in differentiated osteoblasts. Phosphorylates PLCG1, FRS2 and PAK4. Ligand binding leads to the activation of several signaling cascades. Activation of PLCG1 leads to the production of the cellular signaling molecules diacylglycerol and inositol 1,4,5-trisphosphate. Phosphorylation of FRS2 triggers recruitment of GRB2, GAB1, PIK3R1 and SOS1, and mediates activation of RAS, MAPK1/ERK2, MAPK3/ERK1 and the MAP kinase signaling pathway, as well as of the AKT1 signaling pathway. FGFR2 signaling is down-regulated by ubiquitination, internalization and degradation. Mutations that lead to constitutive kinase activation or impair normal FGFR2 maturation, internalization and degradation lead to aberrant signaling. Over-expressed FGFR2 promotes activation of STAT1. The chain is Fibroblast growth factor receptor 2 (fgfr2) from Danio rerio (Zebrafish).